A 220-amino-acid polypeptide reads, in one-letter code: Probable GTP-binding protein EngB (220 aa).

Residues 31–205 (AGVEIAFAGR…LGILNEWCHP (175 aa)) form the EngB-type G domain. GTP contacts are provided by residues 39–46 (GRSNAGKS), 66–70 (GRTQL), 84–87 (DLPG), 151–154 (TKAD), and 184–186 (FSS). Mg(2+) is bound by residues Ser46 and Thr68.

The protein belongs to the TRAFAC class TrmE-Era-EngA-EngB-Septin-like GTPase superfamily. EngB GTPase family. Mg(2+) is required as a cofactor.

Necessary for normal cell division and for the maintenance of normal septation. The polypeptide is Probable GTP-binding protein EngB (Shewanella sediminis (strain HAW-EB3)).